We begin with the raw amino-acid sequence, 325 residues long: E3 ubiquitin-protein ligase EL5 (325 aa).

The tract at residues 1–29 is disordered; the sequence is MVRGVEQGGPAMDESSSSSSPSPVSAPAG. Residues 15 to 28 show a composition bias toward low complexity; it reads SSSSSSPSPVSAPA. Residues 38-58 traverse the membrane as a helical segment; the sequence is IATVAAVLIVFAALTLAFVLL. Residues 70–105 form a disordered region; sequence TTTSTSGRGRRPRPRRRSGSGGDGGTGGGVDPEVLR. Basic residues predominate over residues 77 to 87; the sequence is RGRRPRPRRRS. Positions 88 to 99 are enriched in gly residues; that stretch reads GSGGDGGTGGGV. Residues 134 to 176 form an RING-type; atypical zinc finger; sequence CAVCLAELEDGEEARFLPRCGHGFHAECVDMWLGSHSTCPLCR. 2 disordered regions span residues 267–289 and 303–325; these read GAAGSTSSCSCATGGDNDDGDVE and AATPARPPEAEAGARTAAAHVRN. Residues 268–281 are compositionally biased toward low complexity; the sequence is AAGSTSSCSCATGG.

Its subcellular location is the cell membrane. It catalyses the reaction S-ubiquitinyl-[E2 ubiquitin-conjugating enzyme]-L-cysteine + [acceptor protein]-L-lysine = [E2 ubiquitin-conjugating enzyme]-L-cysteine + N(6)-ubiquitinyl-[acceptor protein]-L-lysine.. Its pathway is protein modification; protein ubiquitination. Functionally, functions as an E3 ubiquitin-protein ligase in cooperation with the E2 ubiquitin conjugating enzymes UBC5A and UBC5B. Involved in root development. Required for the maintenance of cell viability after the initiation of root primordial formation. May mediate the degradation of cytotoxic proteins produced in root cells after the actions of auxin, cytokinin and jasmonic acid. Mediates 'Lys-48'-linked polyubiquitination of MBP in vitro. The polypeptide is E3 ubiquitin-protein ligase EL5 (EL5.1) (Oryza sativa subsp. japonica (Rice)).